The sequence spans 793 residues: MARELSQEALLDFLCQAGGRVTNAALLSHFKSFLRDPDASPSQHQHRRELFKGFVNSVAAVRQDPDGTKYVVLKRRYRDLLGEEGLQRPREPPAAAPSAGGAAPCSPRGARRGEPPQQQPRRRRREKEPEEEPAGAAARAADAACNGLPGSDSRRAPGKGGGSKGSPGQRPPVPAAAAAGAQARASCAAAKTQGRCCWECLQNNLAVLPGELGALPHSATAEEKPARALPAQDDRGASREREEGALAEPAPVPAVAHSPPATVEAATSRASPPALLPGPAPRGDRPELLTPSSLHYSTLQQQQQRTREWVARHPQVPEARDQGPIRAWSVLPDNFLQLPLEPGSTEPNSEPPDPCLSSHSLFPVVPDESWESWAGNPSLTVFRSIRCQLSLQDLDDFVDQESDGSEESSSGPKDSPGASEEGLQVVLGTPDRGKLRNPAGGLSVSRKEGSPSRSPQGLRNRGDGHISQQVPAGANGLAGHPLKPLPWPVPKLRRSLRRSSLAGRAKLSSSDEEYLDEGLLKRSRRPPRSRKPSKAGTAPSPRVDAGLSLKLAEVKAVVAERGWRHSLWVPSGEGSAALAPHRTSEHKSSLVPLDAREHEWIVKLASGSWIQVWTLFWEDPQLALHKDFLTGYTALHWIAKHGDLRALQDLVSGAKKAGIVLDVNVRSSCGYTPLHLAAIHGHQGVIKLLVQRLASRVNVRDSSGKKPWQYLTSNTSGEIWQLLGAPRGKPIFPVYPLVGSSSPTRKAKSKEISRSVTRKTSFAALLKSQHNKWKLANQYEKFHSPREREEYSD.

Disordered stretches follow at residues 83 to 185 (EEGL…QARA), 219 to 290 (ATAE…ELLT), 337 to 360 (QLPLEPGSTEPNSEPPDPCLSSHS), and 396 to 543 (DFVD…SPRV). Composition is skewed to low complexity over residues 96-108 (APSAGGAAPCSPR), 134-144 (AGAAARAADAA), and 175-185 (AAAAAGAQARA). Serine 106 carries the phosphoserine modification. The span at 220–244 (TAEEKPARALPAQDDRGASREREEG) shows a compositional bias: basic and acidic residues. A compositionally biased stretch (low complexity) spans 246–273 (LAEPAPVPAVAHSPPATVEAATSRASPP). Serine 271 carries the phosphoserine modification. Acidic residues predominate over residues 396–406 (DFVDQESDGSE). Low complexity-rich tracts occupy residues 407–417 (ESSSGPKDSPG) and 498–508 (RSSLAGRAKLS). The segment covering 521 to 533 (KRSRRPPRSRKPS) has biased composition (basic residues). ANK repeat units lie at residues 630 to 659 (TGYTALHWIAKHGDLRALQDLVSGAKKAGI) and 669 to 699 (CGYTPLHLAAIHGHQGVIKLLVQRLASRVNV). The residue at position 761 (serine 761) is a Phosphoserine.

This sequence belongs to the SOWAH family.

This Homo sapiens (Human) protein is Ankyrin repeat domain-containing protein SOWAHB (SOWAHB).